The chain runs to 625 residues: MDIYEAASQGRIDAIKFAVEQGCDVDGPNEDGKTPLWFAVQSGQPEACRFLMSLGAGRGPQNPSLLEVAVGGGYADIVALLWPHCNAEREHRSLKTAISLGFHEIADFLIETGAFEYQDSEVSGTESLIEDGSPERESTVFQQWERFLFVRRGQKLPLHRVFFDYALLLATKAGRNAGLRLVEFLLGESMPDVNCKIMINGQFETPLTAAAEKGNLEILATLIDHPNIDLTICGKYNWPAFLHLLASPLSISTERGRVIARRLAYKAVYNRLFIDSREIRLQGAFQNVLRFGDDGLVKQVIDLVRGAAGTLILPLLIRANEVDGLTWVLNCDGVSSKKPPPAFWVLLCQYFKRYQDQDALGLFTSVTEFLVEKKIWNQAILKCLHACNFSFIQQFFYPLSEAPPKEVTEETLSPGFENLLFSNADLNGSDPHPNGLGRLELEIIPHAFFDDPSSAAQKISLRSALPSASPNPSNPHLYSYQMELIRLEQQNKRRLFFAGDTRCPLSWAAKSHNAPLVNALLRSPQVNVNFQDPSDRTPLLYAIAVNDRPIVERLLNHRDIDLNLRDAEGRTAIFYAAQGGDLSIVQLLIGTQNVDFSIRNKNGKNVKEFAKKAKLKQDIVAALSN.

ANK repeat units follow at residues 1–27 (MDIY…DVDG), 31–60 (DGKT…GRGP), 62–89 (NPSL…NAER), 90–119 (EHRS…EYQD), 162–195 (FFDY…DVNC), 202–232 (QFET…DLTI), 500–530 (DTRC…NVNF), 534–562 (SDRT…DIDL), and 568–598 (EGRT…DFSI).

The protein operates within secondary metabolite biosynthesis. Its function is as follows. Ankyrin repeat domain-containing protein; part of the gene cluster that mediates the biosynthesis of oryzines, natural products with an unusual maleidride backbone. The two subunits of the fungal fatty acid synthase oryfasA and oryfasB probably form octenoic acid. This fatty acid is most likely activated by the acyl-CoA ligase oryP to give octenyl-CoA before the citrate synthase-like protein oryE catalyzes condensation with oxaloacetate to form tricarboxylic acid. The next steps of the pathways are conjectural, but a favorite possible route has been proposed, beginning with decarboxylation and concomitant dehydration by the decarboxylase oryM, followed by tautomerization, which may lead to the production of a diene intermediate. Reduction of this diene intermediate could give the known metabolite piliformic acid. On the pathway to oryzine B and oryzine A, however, hydroxylation of the diene by the alpha-ketoglutarate-dependent dioxygenase oryG and lactonisation by the lactonohydrolases oryH or oryL could give oryzine B directly. Finally, enoyl reduction by the dehydrogenase oryD would then convert oryzine B into oryzine A. This is Ankyrin repeat domain-containing protein oryK from Aspergillus oryzae (strain ATCC 42149 / RIB 40) (Yellow koji mold).